Reading from the N-terminus, the 276-residue chain is Diaminopimelate epimerase (276 aa).

The substrate site is built by asparagine 13, glutamine 46, and asparagine 66. The Proton donor role is filled by cysteine 75. Substrate contacts are provided by residues 76–77 (GN), asparagine 159, asparagine 192, and 210–211 (ER). Catalysis depends on cysteine 219, which acts as the Proton acceptor. 220 to 221 (GT) is a binding site for substrate.

It belongs to the diaminopimelate epimerase family. As to quaternary structure, homodimer.

It localises to the cytoplasm. It carries out the reaction (2S,6S)-2,6-diaminopimelate = meso-2,6-diaminopimelate. It participates in amino-acid biosynthesis; L-lysine biosynthesis via DAP pathway; DL-2,6-diaminopimelate from LL-2,6-diaminopimelate: step 1/1. In terms of biological role, catalyzes the stereoinversion of LL-2,6-diaminopimelate (L,L-DAP) to meso-diaminopimelate (meso-DAP), a precursor of L-lysine and an essential component of the bacterial peptidoglycan. The sequence is that of Diaminopimelate epimerase from Stutzerimonas stutzeri (strain A1501) (Pseudomonas stutzeri).